Here is a 414-residue protein sequence, read N- to C-terminus: Membrane protein UL43 (414 aa).

6 helical membrane passes run 39–59 (GFAH…VVLS), 61–81 (GPYA…LGFL), 96–116 (AWLR…GEAG), 121–141 (VPGP…LLVL), 148–168 (LFLL…VGGL), and 184–204 (AAAL…GDSF). Residues 225-253 (PRYAPEDAERPTDHGPLLPSTHHQRSPRV) are disordered. Residues 228 to 237 (APEDAERPTD) show a composition bias toward basic and acidic residues. The next 2 helical transmembrane spans lie at 339–359 (GLMF…AVWI) and 383–403 (ATLR…GVLV).

Belongs to the alphaherpesvirinae HHV-1 UL43 family.

The protein resides in the membrane. The chain is Membrane protein UL43 from Homo sapiens (Human).